Consider the following 158-residue polypeptide: Ribosome maturation factor RimP (158 aa).

Belongs to the RimP family.

It localises to the cytoplasm. Its function is as follows. Required for maturation of 30S ribosomal subunits. This is Ribosome maturation factor RimP from Pseudomonas syringae pv. tomato (strain ATCC BAA-871 / DC3000).